Consider the following 153-residue polypeptide: MKTFVLHIFIFALVAFASASRDSARKIGSQYDNYATCLAEHSLTEDDIFSIGEVSSGQHKTNHEDTELHKNGCVMQCLLEKDGLMSGADYDEEKMREDYIKETGAQPGDQRIEALNACMQETKDMEDKCDKSLLLVACVLAAEAVLADSNEGA.

A signal peptide spans 1–19 (MKTFVLHIFIFALVAFASA). 3 cysteine pairs are disulfide-bonded: C37-C77, C73-C129, and C118-C138.

It belongs to the PBP/GOBP family. As to quaternary structure, homodimer.

Its subcellular location is the secreted. Its function is as follows. Colony queen number, a major feature of social organization, is associated with worker genotype for Gp-9. Colonies are headed by either a single reproductive queen (monogyne form) or multiple queens (polygyne form). Differences in worker Gp-9 genotypes between social forms may cause differences in workers' abilities to recognize queens and regulate their numbers. The protein is Pheromone-binding protein Gp-9 of Solenopsis invicta (Red imported fire ant).